The sequence spans 417 residues: 3-ketoacyl-CoA thiolase, peroxisomal (417 aa).

The transit peptide at 1–15 (MSQRLQSIKDHLVES) directs the protein to the peroxisome. The tract at residues 1 to 15 (MSQRLQSIKDHLVES) is PTS2-type peroxisomal targeting signal. The active-site Acyl-thioester intermediate is the C125. Catalysis depends on proton acceptor residues H375 and C403.

Belongs to the thiolase-like superfamily. Thiolase family. As to quaternary structure, homodimer. Interacts (via PTS2-type peroxisomal targeting signal region) with PEX7; leading to its translocation into peroxisomes.

Its subcellular location is the peroxisome. The protein resides in the mitochondrion intermembrane space. It catalyses the reaction an acyl-CoA + acetyl-CoA = a 3-oxoacyl-CoA + CoA. It functions in the pathway lipid metabolism; fatty acid metabolism. Functionally, responsible for the thiolytic cleavage of straight chain 3-keto fatty acyl-CoAs (3-oxoacyl-CoAs). In Saccharomyces cerevisiae (strain ATCC 204508 / S288c) (Baker's yeast), this protein is 3-ketoacyl-CoA thiolase, peroxisomal (POT1).